A 304-amino-acid polypeptide reads, in one-letter code: Bifunctional phosphoglucose/phosphomannose isomerase (304 aa).

Residues 16 to 147 (FDKSFKVGKY…KPKIGDVDEA (132 aa)) enclose the SIS domain. Residues glycine 35, serine 36, serine 74, serine 76, threonine 79, and arginine 122 each coordinate D-fructose 6-phosphate. Glutamate 196 functions as the Proton acceptor in the catalytic mechanism. Histidine 212 and lysine 300 together coordinate D-fructose 6-phosphate. Histidine 212 (proton donor) is an active-site residue. The active-site Proton acceptor is the lysine 300.

Belongs to the PGI/PMI family. As to quaternary structure, homodimer.

It catalyses the reaction alpha-D-glucose 6-phosphate = beta-D-fructose 6-phosphate. The catalysed reaction is D-mannose 6-phosphate = D-fructose 6-phosphate. Functionally, dual specificity isomerase that catalyzes the isomerization of both glucose-6-phosphate and mannose-6-phosphate to fructose-6-phosphate. The sequence is that of Bifunctional phosphoglucose/phosphomannose isomerase from Thermoplasma volcanium (strain ATCC 51530 / DSM 4299 / JCM 9571 / NBRC 15438 / GSS1).